Consider the following 387-residue polypeptide: O-methyltransferase asqD (387 aa).

Residue aspartate 252 coordinates S-adenosyl-L-methionine. The active-site Proton acceptor is histidine 294.

Belongs to the class I-like SAM-binding methyltransferase superfamily. Cation-independent O-methyltransferase family.

Its pathway is secondary metabolite biosynthesis. It functions in the pathway alkaloid biosynthesis. The protein operates within mycotoxin biosynthesis. Its function is as follows. O-methyltransferase; part of the gene cluster that mediates the biosynthesis of the aspoquinolone mycotoxins. The role of asqD within the aspoquinolone pathway has still to be determined. The first step of the pathway is catalyzed by the nonribosomal peptide synthetase asqK that condenses anthranilic acid and O-methyl-L-tyrosine to produce 4'-methoxycyclopeptin. 4'-methoxycyclopeptin is then converted to 4'-methoxydehydrocyclopeptin by the ketoglutarate-dependent dioxygenase asqJ. AsqJ also converts its first product 4'-methoxydehydrocyclopeptin to 4'-methoxycyclopenin. The following conversion of 4'-methoxycyclopenin into 4'-methoxyviridicatin is catalyzed by the cyclopenase asqI. 4'-methoxyviridicatin is the precursor of quinolone natural products, and is further converted to quinolinone B. The prenyltransferase asqH1 then catalyzes the canonical Friedel-Crafts alkylation of quinolinone B with dimethylallyl cation to yield dimethylallyl quinolone, which is subjected to FAD-dependent dehydrogenation by the FAD-linked oxidoreductase asqF to yield conjugated aryl diene. The delta(3') double bond then serves as the site of the second alkylation with DMAPP catalyzed by the prenyltransferase asqH2 to yield a carbenium ion intermediate, which can be attacked by H(2)O to yield a styrenyl quinolone containing a C3'-hydroxyprenyl chain. The FAD-dependent monooxygenase asqG performs epoxidation of the terminal C7'-C8' olefin. Finally, after dehydratation of the epoxide at C3 by asqC, the quinolone epoxide rearrangement protein asqO catalyzes an enzymatic 3-exo-tet cyclization to yield the cyclopropyl-THF ring system in aspoquinolone. The sequence is that of O-methyltransferase asqD from Emericella nidulans (strain FGSC A4 / ATCC 38163 / CBS 112.46 / NRRL 194 / M139) (Aspergillus nidulans).